The following is a 702-amino-acid chain: DnaJ homolog subfamily C member 14 (702 aa).

2 disordered regions span residues 1-148 (MAQK…GGNG) and 165-229 (DELE…KRSQ). Positions 75–84 (HGPPGGPGPP) are enriched in pro residues. Residues 88–103 (EDPDQSETSSEEESGV) are compositionally biased toward acidic residues. Over residues 113–133 (TGNQKDGNSFLSIPSACNCQG) the composition is skewed to polar residues. Acidic residues predominate over residues 165 to 175 (DELEEEYDDEE). A compositionally biased stretch (basic residues) spans 192–201 (PPSRRQRHRF). Residues 202-217 (PTKEDTREGGRRDPRS) show a composition bias toward basic and acidic residues. Basic residues predominate over residues 218 to 227 (PGRHRLGRKR). 3 consecutive transmembrane segments (helical) span residues 250–270 (AGFW…ETCG), 300–320 (GWAQ…VGLF), and 326–346 (LLGA…QLGW). The J domain maps to 443–507 (NPFHVLGVEA…EKRKEYEMKR (65 aa)). Residues 658–702 (MPNGNFFAAPQPAPGAAAASKPNSTVPKGEAKPKRRKKVRRPFQR) form a disordered region. Low complexity predominate over residues 659–676 (PNGNFFAAPQPAPGAAAA). Positions 690 to 702 (PKRRKKVRRPFQR) are enriched in basic residues.

In terms of assembly, interacts with the FxxxFxxxF motif of DRD1 via its C-terminal domain. In terms of tissue distribution, highly expressed in pancreas and selectively expressed in brain, lung, liver, skeletal muscle and kidney.

The protein resides in the endoplasmic reticulum membrane. In terms of biological role, regulates the export of target proteins, such as DRD1, from the endoplasmic reticulum to the cell surface. This Homo sapiens (Human) protein is DnaJ homolog subfamily C member 14 (DNAJC14).